The primary structure comprises 379 residues: Lipid-A-disaccharide synthase (379 aa).

It belongs to the LpxB family.

It carries out the reaction a lipid X + a UDP-2-N,3-O-bis[(3R)-3-hydroxyacyl]-alpha-D-glucosamine = a lipid A disaccharide + UDP + H(+). The protein operates within bacterial outer membrane biogenesis; LPS lipid A biosynthesis. Functionally, condensation of UDP-2,3-diacylglucosamine and 2,3-diacylglucosamine-1-phosphate to form lipid A disaccharide, a precursor of lipid A, a phosphorylated glycolipid that anchors the lipopolysaccharide to the outer membrane of the cell. In Persephonella marina (strain DSM 14350 / EX-H1), this protein is Lipid-A-disaccharide synthase.